We begin with the raw amino-acid sequence, 60 residues long: Large ribosomal subunit protein bL32 (60 aa).

Positions 1 to 19 (MAVPKRKKSKSRRNMHRSH) are enriched in basic residues. The interval 1–24 (MAVPKRKKSKSRRNMHRSHHAIEP) is disordered.

It belongs to the bacterial ribosomal protein bL32 family.

The protein is Large ribosomal subunit protein bL32 of Wolbachia pipientis wMel.